Consider the following 138-residue polypeptide: uncharacterized protein (138 aa).

3 helical membrane passes run 17 to 37 (IVVS…TIYF), 43 to 63 (FTVV…LLVC), and 117 to 137 (FWWM…LVSL).

The protein resides in the cell membrane. This is an uncharacterized protein from Mycoplasma genitalium (strain ATCC 33530 / DSM 19775 / NCTC 10195 / G37) (Mycoplasmoides genitalium).